Reading from the N-terminus, the 457-residue chain is tRNA-2-methylthio-N(6)-dimethylallyladenosine synthase (457 aa).

One can recognise an MTTase N-terminal domain in the interval 3 to 120 (KKVYVKTFGC…LPQMIDARRE (118 aa)). [4Fe-4S] cluster-binding residues include cysteine 12, cysteine 49, cysteine 83, cysteine 157, cysteine 161, and cysteine 164. Residues 143 to 377 (RVEGPSAFVS…QATIEENVAR (235 aa)) form the Radical SAM core domain. One can recognise a TRAM domain in the interval 380–447 (QSMLGKVERI…PHSLRGELVL (68 aa)).

It belongs to the methylthiotransferase family. MiaB subfamily. In terms of assembly, monomer. [4Fe-4S] cluster is required as a cofactor.

Its subcellular location is the cytoplasm. It carries out the reaction N(6)-dimethylallyladenosine(37) in tRNA + (sulfur carrier)-SH + AH2 + 2 S-adenosyl-L-methionine = 2-methylsulfanyl-N(6)-dimethylallyladenosine(37) in tRNA + (sulfur carrier)-H + 5'-deoxyadenosine + L-methionine + A + S-adenosyl-L-homocysteine + 2 H(+). Its function is as follows. Catalyzes the methylthiolation of N6-(dimethylallyl)adenosine (i(6)A), leading to the formation of 2-methylthio-N6-(dimethylallyl)adenosine (ms(2)i(6)A) at position 37 in tRNAs that read codons beginning with uridine. The polypeptide is tRNA-2-methylthio-N(6)-dimethylallyladenosine synthase (Burkholderia thailandensis (strain ATCC 700388 / DSM 13276 / CCUG 48851 / CIP 106301 / E264)).